Here is a 306-residue protein sequence, read N- to C-terminus: Non-specific ribonucleoside hydrolase RihC (306 aa).

The active site involves histidine 235.

Belongs to the IUNH family. RihC subfamily.

Its function is as follows. Hydrolyzes both purine and pyrimidine ribonucleosides with a broad-substrate specificity. The polypeptide is Non-specific ribonucleoside hydrolase RihC (Salmonella heidelberg (strain SL476)).